The chain runs to 281 residues: Cell growth regulator with EF hand domain protein 1 (281 aa).

The N-terminal stretch at 1–21 (MFQWLMQALMLPLLLLPLGRA) is a signal peptide. EF-hand domains follow at residues 71–106 (DREQ…ALAP) and 115–150 (PVIL…PKHT). Ca(2+) is bound by residues aspartate 84, aspartate 86, asparagine 88, glutamine 90, glutamate 95, aspartate 128, aspartate 130, aspartate 132, and glutamate 139. The tract at residues 148-281 (KHTESLPPAL…HSIQLENDEI (134 aa)) is disordered. Over residues 168–183 (LLANSPLQSETQQSLG) the composition is skewed to polar residues. Over residues 184-213 (TKEEIRGQVEAKRASLEPEQEAGHQTEGKV) the composition is skewed to basic and acidic residues. Phosphoserine is present on residues serine 217 and serine 228. Over residues 237 to 256 (EGAEEQVEIKDNEGEAKELL) the composition is skewed to basic and acidic residues.

In terms of processing, probably digested extracellularly by an unknown serine protease generating extremely hydrophobic bioactive peptides.

It is found in the secreted. Functionally, mediates cell-cell adhesion in a calcium-dependent manner. Able to inhibit growth in several cell lines. The protein is Cell growth regulator with EF hand domain protein 1 of Mus musculus (Mouse).